A 268-amino-acid polypeptide reads, in one-letter code: Thiazole synthase (268 aa).

The Schiff-base intermediate with DXP role is filled by lysine 111. 1-deoxy-D-xylulose 5-phosphate contacts are provided by residues glycine 172, 198-199 (AG), and 220-221 (NT).

Belongs to the ThiG family. As to quaternary structure, homotetramer. Forms heterodimers with either ThiH or ThiS.

It is found in the cytoplasm. It catalyses the reaction [ThiS sulfur-carrier protein]-C-terminal-Gly-aminoethanethioate + 2-iminoacetate + 1-deoxy-D-xylulose 5-phosphate = [ThiS sulfur-carrier protein]-C-terminal Gly-Gly + 2-[(2R,5Z)-2-carboxy-4-methylthiazol-5(2H)-ylidene]ethyl phosphate + 2 H2O + H(+). It functions in the pathway cofactor biosynthesis; thiamine diphosphate biosynthesis. In terms of biological role, catalyzes the rearrangement of 1-deoxy-D-xylulose 5-phosphate (DXP) to produce the thiazole phosphate moiety of thiamine. Sulfur is provided by the thiocarboxylate moiety of the carrier protein ThiS. In vitro, sulfur can be provided by H(2)S. The chain is Thiazole synthase from Caulobacter sp. (strain K31).